Reading from the N-terminus, the 475-residue chain is Lipoprotein lipase (475 aa).

Positions 1–27 (MESKALLVLTLAVWLQSLTASRGGVAA) are cleaved as a signal peptide. The tract at residues 32–53 (RDFIDIESKFALRTPEDTAEDT) is interaction with GPIHBP1. A disulfide bond links C54 and C67. N70 is a glycosylation site (N-linked (GlcNAc...) asparagine). 3'-nitrotyrosine is present on Y121. Residue S159 is the Nucleophile of the active site. The active-site Charge relay system is the D183. At Y191 the chain carries 3'-nitrotyrosine. 4 residues coordinate Ca(2+): A194, R197, S199, and D202. The cysteines at positions 243 and 266 are disulfide-linked. Residues 243-266 (CNIGEAIRVIAERGLGDVDQLVKC) form an essential for determining substrate specificity region. H268 functions as the Charge relay system in the catalytic mechanism. 2 disulfide bridges follow: C291–C310 and C302–C305. In terms of domain architecture, PLAT spans 341–464 (FHYQVKIHFS…KGKAPAVFVK (124 aa)). Residue Y343 is modified to 3'-nitrotyrosine. N386 is a glycosylation site (N-linked (GlcNAc...) asparagine). Positions 417-421 (WSDWW) are important for interaction with lipoprotein particles. Positions 430 to 434 (KIRVK) are important for heparin binding. The segment at 443–467 (IFCSREKVSHLQKGKAPAVFVKCHD) is interaction with GPIHBP1. C445 and C465 are joined by a disulfide.

It belongs to the AB hydrolase superfamily. Lipase family. In terms of assembly, homodimer. Interacts with GPIHBP1 with 1:1 stoichiometry. Interacts with APOC2; the interaction activates LPL activity in the presence of lipids. Interaction with heparan sulfate proteoglycans is required to protect LPL against loss of activity. Associates with lipoprotein particles in blood plasma. Interacts with LMF1 and SEL1L; interaction with SEL1L is required to prevent aggregation of newly synthesized LPL in the endoplasmic reticulum (ER), and for normal export of LPL from the ER to the extracellular space. Interacts with SORL1; SORL1 acts as a sorting receptor, promoting LPL localization to endosomes and later to lysosomes, leading to degradation of newly synthesized LPL. Post-translationally, tyrosine nitration after lipopolysaccharide (LPS) challenge down-regulates the lipase activity. Detected in blood plasma. Detected in milk (at protein level).

It localises to the cell membrane. It is found in the secreted. The protein localises to the extracellular space. The protein resides in the extracellular matrix. It catalyses the reaction a triacylglycerol + H2O = a diacylglycerol + a fatty acid + H(+). It carries out the reaction a 1,2-diacyl-sn-glycero-3-phosphocholine + H2O = a 2-acyl-sn-glycero-3-phosphocholine + a fatty acid + H(+). The enzyme catalyses 1,2,3-tri-(9Z-octadecenoyl)-glycerol + H2O = di-(9Z)-octadecenoylglycerol + (9Z)-octadecenoate + H(+). The catalysed reaction is 1,2-di-(9Z-octadecenoyl)-sn-glycero-3-phosphocholine + H2O = (9Z-octadecenoyl)-sn-glycero-3-phosphocholine + (9Z)-octadecenoate + H(+). It catalyses the reaction 1,2,3-tributanoylglycerol + H2O = dibutanoylglycerol + butanoate + H(+). It carries out the reaction 1,2-dihexadecanoyl-sn-glycero-3-phosphocholine + H2O = hexadecanoyl-sn-glycero-3-phosphocholine + hexadecanoate + H(+). With respect to regulation, the apolipoprotein APOC2 acts as a coactivator of LPL activity. Ca(2+) binding promotes protein stability and formation of the active homodimer. Interaction with GPIHBP1 protects LPL against inactivation by ANGPTL4. Inhibited by NaCl. Functionally, key enzyme in triglyceride metabolism. Catalyzes the hydrolysis of triglycerides from circulating chylomicrons and very low density lipoproteins (VLDL), and thereby plays an important role in lipid clearance from the blood stream, lipid utilization and storage. Although it has both phospholipase and triglyceride lipase activities it is primarily a triglyceride lipase with low but detectable phospholipase activity. Mediates margination of triglyceride-rich lipoprotein particles in capillaries. Recruited to its site of action on the luminal surface of vascular endothelium by binding to GPIHBP1 and cell surface heparan sulfate proteoglycans. The chain is Lipoprotein lipase (LPL) from Homo sapiens (Human).